The primary structure comprises 127 residues: MNIPADLLYTKDHEWIKVLDDGTTALVGITDFAQSELGDIVFVETKPVGTELSEHDVFGTVEAVKTVADLFAPVDGVIVEVNEALDAAEVVNSSPYEDGWMVKVSLKDASQFDALMSAAEYSEMVGE.

The Lipoyl-binding domain occupies 24–105; it reads TALVGITDFA…YEDGWMVKVS (82 aa). K65 is modified (N6-lipoyllysine).

Belongs to the GcvH family. In terms of assembly, the glycine cleavage system is composed of four proteins: P, T, L and H. (R)-lipoate is required as a cofactor.

Its function is as follows. The glycine cleavage system catalyzes the degradation of glycine. The H protein shuttles the methylamine group of glycine from the P protein to the T protein. The chain is Glycine cleavage system H protein from Prosthecochloris aestuarii (strain DSM 271 / SK 413).